We begin with the raw amino-acid sequence, 359 residues long: Stearoyl-CoA desaturase (359 aa).

The Cytoplasmic portion of the chain corresponds to 1 to 72 (MPAHLLQEEI…EGPKPKLEYV (72 aa)). Residues 73 to 93 (WRNIILMSLLHLGALYGITLI) traverse the membrane as a helical segment. N75 lines the substrate pocket. Residues 94-97 (PTCK) are Lumenal-facing. A helical transmembrane segment spans residues 98-118 (IYTYIWVLFYYLMGALGITAG). Over 119-217 (AHRLWSHRTY…EKLVMFQRRY (99 aa)) the chain is Cytoplasmic. Fe cation-binding residues include H120 and H125. Positions 120-125 (HRLWSH) match the Histidine box-1 motif. Residues N148, R155, and D156 each contribute to the substrate site. H157, H160, and H161 together coordinate Fe cation. Positions 157-161 (HRAHH) match the Histidine box-2 motif. Positions 188 and 189 each coordinate substrate. A phosphoserine mark is found at S198 and S203. The chain crosses the membrane as a helical span at residues 218-237 (YKPGVLLLCFILPTLVPWYL). The Lumenal portion of the chain corresponds to 238-241 (WDET). Residues 242–263 (FQNSLFFATLFRYALGLNVTWL) form a helical membrane-spanning segment. W262 contacts substrate. At 264 to 359 (VNSAAHMYGY…RTGEESYKSG (96 aa)) the chain is on the cytoplasmic side. H269, H298, H301, and H302 together coordinate Fe cation. The short motif at 298–302 (HNYHH) is the Histidine box-3 element.

It belongs to the fatty acid desaturase type 1 family. Fe(2+) is required as a cofactor.

It localises to the endoplasmic reticulum membrane. It catalyses the reaction octadecanoyl-CoA + 2 Fe(II)-[cytochrome b5] + O2 + 2 H(+) = (9Z)-octadecenoyl-CoA + 2 Fe(III)-[cytochrome b5] + 2 H2O. The enzyme catalyses hexadecanoyl-CoA + 2 Fe(II)-[cytochrome b5] + O2 + 2 H(+) = (9Z)-hexadecenoyl-CoA + 2 Fe(III)-[cytochrome b5] + 2 H2O. In terms of biological role, stearoyl-CoA desaturase that utilizes O(2) and electrons from reduced cytochrome b5 to introduce the first double bond into saturated fatty acyl-CoA substrates. Catalyzes the insertion of a cis double bond at the delta-9 position into fatty acyl-CoA substrates including palmitoyl-CoA and stearoyl-CoA. Gives rise to a mixture of 16:1 and 18:1 unsaturated fatty acids. Plays an important role in lipid biosynthesis. Plays an important role in regulating the expression of genes that are involved in lipogenesis and in regulating mitochondrial fatty acid oxidation. Plays an important role in body energy homeostasis. Contributes to the biosynthesis of membrane phospholipids, cholesterol esters and triglycerides. This is Stearoyl-CoA desaturase (SCD) from Bos taurus (Bovine).